A 288-amino-acid polypeptide reads, in one-letter code: Carbon monoxide dehydrogenase medium chain (288 aa).

Positions 1–177 constitute an FAD-binding PCMH-type domain; the sequence is MIPGSFDYHR…TAIRIPVPPT (177 aa). FAD-binding positions include 32-36 and 111-115; these read AGGHS and TIGGN.

In terms of assembly, dimer of heterotrimers. Each heterotrimer consists of a large, a medium and a small subunit. FAD serves as cofactor.

It carries out the reaction CO + a quinone + H2O = a quinol + CO2. Its function is as follows. Catalyzes the oxidation of carbon monoxide to carbon dioxide. The chain is Carbon monoxide dehydrogenase medium chain (coxM) from Afipia carboxidovorans (strain ATCC 49405 / DSM 1227 / KCTC 32145 / OM5) (Oligotropha carboxidovorans).